Consider the following 192-residue polypeptide: Leucine-rich repeat-containing protein 51 (192 aa).

3 LRR repeats span residues 50 to 71 (MTQSLWLNNNVLTDLRDFNHAV), 80 to 101 (NLAWIDLSFNDLTSIDPVLTTF), and 103 to 124 (NLSVLYLHGNSIQRLGEVNKLA). An LRRCT domain is found at 137-175 (NPIEEEKGYRQYVLCTLPHITTFDFSGVTKADRTTAEVW).

The protein resides in the cytoplasm. The sequence is that of Leucine-rich repeat-containing protein 51 from Bos taurus (Bovine).